Reading from the N-terminus, the 845-residue chain is Disintegrin and metalloproteinase domain-containing protein 9 (845 aa).

A signal peptide spans 1–29; it reads MGPRALSPLASLRLRWLLACGLLGPVLEA. Residues 30–697 lie on the Extracellular side of the membrane; it reads GRPDLEQTVH…YNAKSTALRD (668 aa). Residues Asn144, Asn154, and Asn231 are each glycosylated (N-linked (GlcNAc...) asparagine). The 195-residue stretch at 212–406 folds into the Peptidase M12B domain; the sequence is RYVELFIVVD…KGGSCLLNIP (195 aa). Intrachain disulfides connect Cys322–Cys401, Cys363–Cys385, Cys365–Cys370, and Cys473–Cys493. His347 provides a ligand contact to Zn(2+). Residue Glu348 is part of the active site. Zn(2+)-binding residues include His351 and His357. N-linked (GlcNAc...) asparagine glycans are attached at residues Asn381, Asn487, and Asn636. Residues 414-501 enclose the Disintegrin domain; sequence APSCGNKLVD…FCPPDVFIQN (88 aa). 3 cysteine pairs are disulfide-bonded: Cys644-Cys656, Cys650-Cys662, and Cys664-Cys673. An EGF-like domain is found at 644–698; the sequence is CDIQGKCHGHGVCNSNKNCHCEDGWAPPHCDTKGYGGSVDSGPTYNAKSTALRDG. Residues 698 to 718 form a helical membrane-spanning segment; it reads GLLVFFFLIVPLVAAAIFLFI. Residues 719–845 are Cytoplasmic-facing; that stretch reads KRDELRKTFR…PAPPLYSSLT (127 aa). A disordered region spans residues 729–845; sequence KKRSQMSDGR…PAPPLYSSLT (117 aa). A compositionally biased stretch (polar residues) spans 734-745; that stretch reads MSDGRNQANVSR. The span at 783–794 shows a compositional bias: pro residues; that stretch reads PGGPGVSRPPPG.

In terms of assembly, interacts with SH3GL2 and SNX9 through its cytoplasmic tail. Interacts with ITGA6. Zn(2+) is required as a cofactor. Post-translationally, proteolytically cleaved in the trans-Golgi network before it reaches the plasma membrane to generate a mature protein. The removal of the pro-domain occurs via cleavage at two different sites. Processed most likely by a pro-protein convertase such as furin, at the boundary between the pro-domain and the catalytic domain. An additional upstream cleavage pro-protein convertase site (Arg-56/Glu-57) has an important role in the activation of ADAM9. In terms of processing, phosphorylation is induced in vitro by phorbol-12-myristate-13-acetate (PMA).

Its subcellular location is the cell membrane. Synthesized as an inactive form which is proteolytically cleaved to generate an active enzyme. Processing at the upstream site is particularly important for activation of the proenzyme, whereas processing at the boundary between the pro-domain and the catalytic domain does not appear to be essential. Inhibited by hydroxamic acid-based inhibitors. Metalloprotease that cleaves and releases a number of molecules with important roles in tumorigenesis and angiogenesis, such as TEK, KDR, EPHB4, CD40, VCAM1 and CDH5. May mediate cell-cell, cell-matrix interactions and regulate the motility of cells via interactions with integrins. The chain is Disintegrin and metalloproteinase domain-containing protein 9 from Mus musculus (Mouse).